The chain runs to 462 residues: Integrator complex subunit 12 (462 aa).

Residues 39–132 (LARGIDSSYR…PETRSSPITV (94 aa)) are disordered. Residues 59–86 (ISSTKTVSVKQEPKTSSSLPSGNNNGKV) are compositionally biased toward polar residues. K68 participates in a covalent cross-link: Glycyl lysine isopeptide (Lys-Gly) (interchain with G-Cter in SUMO2). The segment covering 88 to 125 (TTEKVKKEGEKRPADKMKSDITEGADVPKKPRLEKPET) has biased composition (basic and acidic residues). Position 128 is a phosphoserine (S128). A PHD-type zinc finger spans residues 159–215 (GLACVVCRQMTVASGNQLVECQECHNLYHQDCHKPQVTDKEVTDPRLVWYCARCTRQ). K254 participates in a covalent cross-link: Glycyl lysine isopeptide (Lys-Gly) (interchain with G-Cter in SUMO2). A compositionally biased stretch (polar residues) spans 305–328 (PSTAKLSSAAQNNSGKPATSSANQ). The segment at 305–462 (PSTAKLSSAA…KKAAQKKLKK (158 aa)) is disordered. Low complexity-rich tracts occupy residues 347–358 (KIGSSNSTSPTV) and 382–431 (VSKV…PSAS). Positions 434–443 (GPTSQESQLN) are enriched in polar residues. A compositionally biased stretch (basic residues) spans 449–462 (QMVKKKAAQKKLKK).

It belongs to the Integrator subunit 12 family. Component of the Integrator complex, composed of core subunits INTS1, INTS2, INTS3, INTS4, INTS5, INTS6, INTS7, INTS8, INTS9/RC74, INTS10, INTS11/CPSF3L, INTS12, INTS13, INTS14 and INTS15. The core complex associates with protein phosphatase 2A subunits PPP2CA and PPP2R1A, to form the Integrator-PP2A (INTAC) complex. Dephosphorylated at Ser-128 by the PNUTS-PP1 complex, promoting RNA polymerase II transcription pause-release.

It localises to the nucleus. Its function is as follows. Component of the integrator complex, a multiprotein complex that terminates RNA polymerase II (Pol II) transcription in the promoter-proximal region of genes. The integrator complex provides a quality checkpoint during transcription elongation by driving premature transcription termination of transcripts that are unfavorably configured for transcriptional elongation: the complex terminates transcription by (1) catalyzing dephosphorylation of the C-terminal domain (CTD) of Pol II subunit POLR2A/RPB1 and SUPT5H/SPT5, (2) degrading the exiting nascent RNA transcript via endonuclease activity and (3) promoting the release of Pol II from bound DNA. The integrator complex is also involved in terminating the synthesis of non-coding Pol II transcripts, such as enhancer RNAs (eRNAs), small nuclear RNAs (snRNAs), telomerase RNAs and long non-coding RNAs (lncRNAs). Mediates recruitment of cytoplasmic dynein to the nuclear envelope, probably as component of the integrator complex. The polypeptide is Integrator complex subunit 12 (INTS12) (Bos taurus (Bovine)).